We begin with the raw amino-acid sequence, 403 residues long: Succinoglycan biosynthesis protein ExoL (403 aa).

It localises to the cytoplasm. It functions in the pathway glycan metabolism; exopolysaccharide biosynthesis. Essential for succinoglycan (EPS I) synthesis and nodule infection. Glycosyltransferase needed for the addition of the third sugar (glucose), catalyzes the formation of a beta-1,4 linkage between the second and third sugars. This Rhizobium meliloti (strain 1021) (Ensifer meliloti) protein is Succinoglycan biosynthesis protein ExoL (exoL).